The sequence spans 637 residues: 1-deoxy-D-xylulose-5-phosphate synthase (637 aa).

Thiamine diphosphate is bound by residues histidine 82 and 123-125 (GHA). Mg(2+) is bound at residue aspartate 154. Residues 155–156 (GS), asparagine 183, tyrosine 295, and glutamate 378 contribute to the thiamine diphosphate site. Mg(2+) is bound at residue asparagine 183.

Belongs to the transketolase family. DXPS subfamily. As to quaternary structure, homodimer. The cofactor is Mg(2+). It depends on thiamine diphosphate as a cofactor.

It catalyses the reaction D-glyceraldehyde 3-phosphate + pyruvate + H(+) = 1-deoxy-D-xylulose 5-phosphate + CO2. Its pathway is metabolic intermediate biosynthesis; 1-deoxy-D-xylulose 5-phosphate biosynthesis; 1-deoxy-D-xylulose 5-phosphate from D-glyceraldehyde 3-phosphate and pyruvate: step 1/1. Its function is as follows. Catalyzes the acyloin condensation reaction between C atoms 2 and 3 of pyruvate and glyceraldehyde 3-phosphate to yield 1-deoxy-D-xylulose-5-phosphate (DXP). This chain is 1-deoxy-D-xylulose-5-phosphate synthase, found in Lawsonia intracellularis (strain PHE/MN1-00).